Here is a 411-residue protein sequence, read N- to C-terminus: Na(+)-translocating NADH-quinone reductase subunit F (411 aa).

Residues 5 to 25 (VILALGIAAFTVIVLVLVAII) form a helical membrane-spanning segment. The 95-residue stretch at 36–130 (GDITIDINDD…NMEVELPEEI (95 aa)) folds into the 2Fe-2S ferredoxin-type domain. Cysteine 73, cysteine 79, cysteine 82, and cysteine 114 together coordinate [2Fe-2S] cluster. The FAD-binding FR-type domain occupies 133–273 (VKKWECTVIS…SGPFGEFFAK (141 aa)).

The protein belongs to the NqrF family. Composed of six subunits; NqrA, NqrB, NqrC, NqrD, NqrE and NqrF. [2Fe-2S] cluster is required as a cofactor. FAD serves as cofactor.

It localises to the cell inner membrane. The enzyme catalyses a ubiquinone + n Na(+)(in) + NADH + H(+) = a ubiquinol + n Na(+)(out) + NAD(+). Its function is as follows. NQR complex catalyzes the reduction of ubiquinone-1 to ubiquinol by two successive reactions, coupled with the transport of Na(+) ions from the cytoplasm to the periplasm. The first step is catalyzed by NqrF, which accepts electrons from NADH and reduces ubiquinone-1 to ubisemiquinone by a one-electron transfer pathway. This is Na(+)-translocating NADH-quinone reductase subunit F from Haemophilus influenzae (strain PittGG).